Here is a 691-residue protein sequence, read N- to C-terminus: Methionine--tRNA ligase (691 aa).

Residues 15–25 carry the 'HIGH' region motif; it reads PYTNGPIHIGH. Residues Cys147, Cys150, Cys160, and Cys163 each coordinate Zn(2+). The short motif at 336–340 is the 'KMSKS' region element; it reads KLSTS. Residue Thr339 participates in ATP binding. In terms of domain architecture, tRNA-binding spans 589–691; that stretch reads DFTKMDLRVG…DGVKAGTTIN (103 aa).

The protein belongs to the class-I aminoacyl-tRNA synthetase family. MetG type 1 subfamily. Homodimer. The cofactor is Zn(2+).

The protein localises to the cytoplasm. The enzyme catalyses tRNA(Met) + L-methionine + ATP = L-methionyl-tRNA(Met) + AMP + diphosphate. Functionally, is required not only for elongation of protein synthesis but also for the initiation of all mRNA translation through initiator tRNA(fMet) aminoacylation. The protein is Methionine--tRNA ligase of Christiangramia forsetii (strain DSM 17595 / CGMCC 1.15422 / KT0803) (Gramella forsetii).